A 416-amino-acid polypeptide reads, in one-letter code: Phosphoribosylamine--glycine ligase (416 aa).

The 207-residue stretch at 107–313 (KDFMKKYNVK…FVDLINAAMD (207 aa)) folds into the ATP-grasp domain. Residue 133-194 (LKKCTYPIVI…EEYLEGVEAS (62 aa)) participates in ATP binding. The Mg(2+) site is built by Glu-283 and Asn-285.

It belongs to the GARS family. The cofactor is Mg(2+). Mn(2+) serves as cofactor.

The enzyme catalyses 5-phospho-beta-D-ribosylamine + glycine + ATP = N(1)-(5-phospho-beta-D-ribosyl)glycinamide + ADP + phosphate + H(+). Its pathway is purine metabolism; IMP biosynthesis via de novo pathway; N(1)-(5-phospho-D-ribosyl)glycinamide from 5-phospho-alpha-D-ribose 1-diphosphate: step 2/2. In Clostridium acetobutylicum (strain ATCC 824 / DSM 792 / JCM 1419 / IAM 19013 / LMG 5710 / NBRC 13948 / NRRL B-527 / VKM B-1787 / 2291 / W), this protein is Phosphoribosylamine--glycine ligase.